We begin with the raw amino-acid sequence, 250 residues long: MNREQAGKALVLIPARMASTRLPGKPLADICGLPMIVQVARRAAEAEVGRIVVAVDHPEVFAAVSDAGFEAIMTRVDHQSGSDRIHEALLKADPQGEAEIVINVQGDLPTIEPGPIRAALKPLENPSTDIATLTVAITDEHEKTNPNVVKVVGSPLSQSRFRALYFTRATAPYGEGPLYHHIGLYAYRRRALETFVSLKPSALEKRESLEQLRALEAGMRIDVEIVDSVPLGVDTPADLDKARRILSARA.

Belongs to the KdsB family.

The protein localises to the cytoplasm. It catalyses the reaction 3-deoxy-alpha-D-manno-oct-2-ulosonate + CTP = CMP-3-deoxy-beta-D-manno-octulosonate + diphosphate. Its pathway is nucleotide-sugar biosynthesis; CMP-3-deoxy-D-manno-octulosonate biosynthesis; CMP-3-deoxy-D-manno-octulosonate from 3-deoxy-D-manno-octulosonate and CTP: step 1/1. The protein operates within bacterial outer membrane biogenesis; lipopolysaccharide biosynthesis. Functionally, activates KDO (a required 8-carbon sugar) for incorporation into bacterial lipopolysaccharide in Gram-negative bacteria. The polypeptide is 3-deoxy-manno-octulosonate cytidylyltransferase (Sinorhizobium medicae (strain WSM419) (Ensifer medicae)).